Reading from the N-terminus, the 495-residue chain is Bifunctional protein GlmU (495 aa).

The pyrophosphorylase stretch occupies residues 1–241 (MPQQTAVVVL…AAKVTGVNDR (241 aa)). UDP-N-acetyl-alpha-D-glucosamine contacts are provided by residues 10 to 13 (LAAG), K24, Q81, and 86 to 87 (GT). D112 contacts Mg(2+). Residues G151, E166, N181, and N239 each coordinate UDP-N-acetyl-alpha-D-glucosamine. Position 239 (N239) interacts with Mg(2+). Residues 242 to 262 (VQLSIATRTMNRYILERHMRA) form a linker region. Positions 263–495 (GVTIIDPAST…QATEQKDGEQ (233 aa)) are N-acetyltransferase. UDP-N-acetyl-alpha-D-glucosamine is bound by residues R344 and K362. The active-site Proton acceptor is H374. Residues Y377 and N388 each contribute to the UDP-N-acetyl-alpha-D-glucosamine site. Acetyl-CoA-binding positions include A391, 397 to 398 (NY), S416, and A434. The interval 467 to 495 (GTAAATAAAQALAADEKSSQATEQKDGEQ) is disordered. Residues 468–479 (TAAATAAAQALA) show a composition bias toward low complexity. Basic and acidic residues predominate over residues 480–495 (ADEKSSQATEQKDGEQ).

The protein in the N-terminal section; belongs to the N-acetylglucosamine-1-phosphate uridyltransferase family. This sequence in the C-terminal section; belongs to the transferase hexapeptide repeat family. In terms of assembly, homotrimer. The cofactor is Mg(2+).

The protein resides in the cytoplasm. The catalysed reaction is alpha-D-glucosamine 1-phosphate + acetyl-CoA = N-acetyl-alpha-D-glucosamine 1-phosphate + CoA + H(+). The enzyme catalyses N-acetyl-alpha-D-glucosamine 1-phosphate + UTP + H(+) = UDP-N-acetyl-alpha-D-glucosamine + diphosphate. It functions in the pathway nucleotide-sugar biosynthesis; UDP-N-acetyl-alpha-D-glucosamine biosynthesis; N-acetyl-alpha-D-glucosamine 1-phosphate from alpha-D-glucosamine 6-phosphate (route II): step 2/2. The protein operates within nucleotide-sugar biosynthesis; UDP-N-acetyl-alpha-D-glucosamine biosynthesis; UDP-N-acetyl-alpha-D-glucosamine from N-acetyl-alpha-D-glucosamine 1-phosphate: step 1/1. It participates in bacterial outer membrane biogenesis; LPS lipid A biosynthesis. Catalyzes the last two sequential reactions in the de novo biosynthetic pathway for UDP-N-acetylglucosamine (UDP-GlcNAc). The C-terminal domain catalyzes the transfer of acetyl group from acetyl coenzyme A to glucosamine-1-phosphate (GlcN-1-P) to produce N-acetylglucosamine-1-phosphate (GlcNAc-1-P), which is converted into UDP-GlcNAc by the transfer of uridine 5-monophosphate (from uridine 5-triphosphate), a reaction catalyzed by the N-terminal domain. This chain is Bifunctional protein GlmU, found in Nocardia farcinica (strain IFM 10152).